The chain runs to 214 residues: External core antigen (214 aa).

A signal peptide spans 1 to 19 (MQLFHLCLIISCTCPTVQA). The HBEAG stretch occupies residues 25-27 (GWL). The interval 165–214 (NAPILSTLPETTVVRRRDRGRSPRRRTPSPRRRRSQSPRRRRSQSRESQC) is disordered. The span at 178–207 (VRRRDRGRSPRRRTPSPRRRRSQSPRRRRS) shows a compositional bias: basic residues. A 1; half-length repeat occupies 186–192 (SPRRRTP). Residues 186-208 (SPRRRTPSPRRRRSQSPRRRRSQ) form a 3 X 8 AA repeats of S-P-R-R-R-R-S-Q region. Positions 186 to 214 (SPRRRTPSPRRRRSQSPRRRRSQSRESQC) are excised as a propeptide. A run of 2 repeats spans residues 193–200 (SPRRRRSQ) and 201–208 (SPRRRRSQ).

It belongs to the orthohepadnavirus precore antigen family. As to quaternary structure, homodimerizes. Post-translationally, phosphorylated. In terms of processing, cleaved by host furin.

Its subcellular location is the secreted. It localises to the host nucleus. Its function is as follows. May regulate immune response to the intracellular capsid in acting as a T-cell tolerogen, by having an immunoregulatory effect which prevents destruction of infected cells by cytotoxic T-cells. This immune regulation may predispose to chronicity during perinatal infections and prevent severe liver injury during adult infections. The sequence is that of External core antigen from Homo sapiens (Human).